A 367-amino-acid chain; its full sequence is Flagellin 2 (367 aa).

It belongs to the bacterial flagellin family.

It is found in the secreted. The protein localises to the bacterial flagellum. Its function is as follows. Flagellin is the subunit protein which polymerizes to form the filaments of bacterial flagella. This chain is Flagellin 2 (fliC2), found in Proteus mirabilis.